A 451-amino-acid polypeptide reads, in one-letter code: Phosphoglucosamine mutase (451 aa).

S102 functions as the Phosphoserine intermediate in the catalytic mechanism. Mg(2+) contacts are provided by S102, D243, D245, and D247. Phosphoserine is present on S102.

This sequence belongs to the phosphohexose mutase family. Mg(2+) serves as cofactor. Activated by phosphorylation.

It catalyses the reaction alpha-D-glucosamine 1-phosphate = D-glucosamine 6-phosphate. In terms of biological role, catalyzes the conversion of glucosamine-6-phosphate to glucosamine-1-phosphate. The chain is Phosphoglucosamine mutase from Chelativorans sp. (strain BNC1).